A 577-amino-acid chain; its full sequence is Double-stranded RNA-binding protein Staufen homolog 1 (577 aa).

N-acetylserine is present on serine 2. Residues 34 to 44 (SIPSTTSSLPS) are compositionally biased toward polar residues. Positions 34-55 (SIPSTTSSLPSENAGRPIQNSA) are disordered. Positions 72-162 (TPTVELNALC…AAKALRILQN (91 aa)) constitute a DRBM 1 domain. Arginine 108 bears the Asymmetric dimethylarginine mark. Arginine 115 carries the asymmetric dimethylarginine; alternate modification. Arginine 115 is modified (omega-N-methylarginine; alternate). Residue serine 176 is modified to Phosphoserine. The DRBM 2 domain maps to 184 to 251 (SEISQVFEIA…AIAVLEELKK (68 aa)). Phosphoserine is present on serine 278. Positions 286 to 354 (NPISRLAQIQ…AENMLEILGF (69 aa)) constitute a DRBM 3 domain. Residues 360–397 (QPTKPALKSEEKTPIKKPGDGRKVTFFEPGSGDENGTS) are disordered. Positions 366–384 (LKSEEKTPIKKPGDGRKVT) are enriched in basic and acidic residues. Serine 390 bears the Phosphoserine mark.

Binds tubulin. Binds with low affinity single-stranded RNA or DNA homopolymers. Interacts with CASC3 in an RNA-dependent manner. Identified in a mRNP complex, at least composed of DHX9, DDX3X, ELAVL1, HNRNPU, IGF2BP1, ILF3, PABPC1, PCBP2, PTBP2, STAU1, STAU2, SYNCRIP and YBX1. In terms of assembly, (Microbial infection) Interacts with HERV-K rec and gag proteins. As to quaternary structure, (Microbial infection) Interacts with HIV-1 GAG polyprotein. (Microbial infection) Interacts with influenza virus NS1 protein. In terms of assembly, (Microbial infection) Interacts with Ebola virus NP, VP30 and VP35. In terms of tissue distribution, widely expressed. Expressed in brain, pancreas, heart, skeletal muscles, liver, lung, kidney and placenta.

It is found in the cytoplasm. The protein resides in the rough endoplasmic reticulum. Functionally, binds double-stranded RNA (regardless of the sequence) and tubulin. May play a role in specific positioning of mRNAs at given sites in the cell by cross-linking cytoskeletal and RNA components, and in stimulating their translation at the site. Its function is as follows. (Microbial infection) Plays a role in virus particles production of many viruses including of HIV-1, HERV-K, ebola virus and influenza virus. Acts by interacting with various viral proteins involved in particle budding process. This chain is Double-stranded RNA-binding protein Staufen homolog 1 (STAU1), found in Homo sapiens (Human).